Here is a 1382-residue protein sequence, read N- to C-terminus: DNA-directed RNA polymerase subunit beta (1382 aa).

This sequence belongs to the RNA polymerase beta chain family. As to quaternary structure, the RNAP catalytic core consists of 2 alpha, 1 beta, 1 beta' and 1 omega subunit. When a sigma factor is associated with the core the holoenzyme is formed, which can initiate transcription.

The enzyme catalyses RNA(n) + a ribonucleoside 5'-triphosphate = RNA(n+1) + diphosphate. In terms of biological role, DNA-dependent RNA polymerase catalyzes the transcription of DNA into RNA using the four ribonucleoside triphosphates as substrates. The sequence is that of DNA-directed RNA polymerase subunit beta from Paracoccus denitrificans (strain Pd 1222).